A 1025-amino-acid chain; its full sequence is Error-prone DNA polymerase (1025 aa).

Belongs to the DNA polymerase type-C family. DnaE2 subfamily.

It is found in the cytoplasm. The enzyme catalyses DNA(n) + a 2'-deoxyribonucleoside 5'-triphosphate = DNA(n+1) + diphosphate. Functionally, DNA polymerase involved in damage-induced mutagenesis and translesion synthesis (TLS). It is not the major replicative DNA polymerase. The protein is Error-prone DNA polymerase of Pseudomonas fluorescens (strain Pf0-1).